Reading from the N-terminus, the 290-residue chain is uncharacterized protein (290 aa).

2 disordered regions span residues 105-156 and 259-290; these read LKHK…KLTV and EGAQ…KSKK. Over residues 114–130 the composition is skewed to polar residues; the sequence is KATQQARKRNFISSKSK. 2 stretches are compositionally biased toward basic and acidic residues: residues 143-156 and 261-280; these read RESK…KLTV and AQRD…EPVL.

This is an uncharacterized protein from Homo sapiens (Human).